Reading from the N-terminus, the 85-residue chain is Type 3 secretion system needle filament protein (85 aa).

The stretch at Leu-13 to Thr-41 forms a coiled coil.

In terms of assembly, the core secretion machinery of the T3SS is composed of approximately 20 different proteins, including cytoplasmic components, a base, an export apparatus and a needle. This subunit polymerizes and forms the helical needle filament. Forms a stable heterotrimeric complex with PscE and PscG in the cytoplasm, blocking it in a monomeric state and preventing its polymerization.

It is found in the secreted. Its subcellular location is the cell surface. Its function is as follows. Component of the type III secretion system (T3SS), also called injectisome, which is used to inject bacterial effector proteins into eukaryotic host cells, facilitating the establishment and dissemination of infection. PscF/SctF forms the external needle filament that protrudes from the bacterial surface. The sequence is that of Type 3 secretion system needle filament protein from Pseudomonas aeruginosa (strain ATCC 15692 / DSM 22644 / CIP 104116 / JCM 14847 / LMG 12228 / 1C / PRS 101 / PAO1).